Reading from the N-terminus, the 148-residue chain is Large ribosomal subunit protein uL16 (148 aa).

Belongs to the universal ribosomal protein uL16 family. Part of the 50S ribosomal subunit.

In terms of biological role, binds 23S rRNA and is also seen to make contacts with the A and possibly P site tRNAs. The polypeptide is Large ribosomal subunit protein uL16 (Gloeobacter violaceus (strain ATCC 29082 / PCC 7421)).